A 511-amino-acid polypeptide reads, in one-letter code: GMP synthase [glutamine-hydrolyzing] (511 aa).

The Glutamine amidotransferase type-1 domain maps to 5 to 195 (DILVLDFGSQ…AKYACNCESV (191 aa)). C82 acts as the Nucleophile in catalysis. Residues H169 and E171 contribute to the active site. Residues 196 to 386 (WNMGSFAKTQ…LGLSKEVVYR (191 aa)) enclose the GMPS ATP-PPase domain. 223–229 (SGGVDSS) is an ATP binding site.

Homodimer.

The enzyme catalyses XMP + L-glutamine + ATP + H2O = GMP + L-glutamate + AMP + diphosphate + 2 H(+). Its pathway is purine metabolism; GMP biosynthesis; GMP from XMP (L-Gln route): step 1/1. Its function is as follows. Catalyzes the synthesis of GMP from XMP. The protein is GMP synthase [glutamine-hydrolyzing] of Campylobacter jejuni (strain RM1221).